Here is a 459-residue protein sequence, read N- to C-terminus: tRNA modification GTPase MnmE (459 aa).

(6S)-5-formyl-5,6,7,8-tetrahydrofolate is bound by residues R22, E87, and R126. Residues 221–381 (GINVAICGKP…LEESIEKAVL (161 aa)) form the TrmE-type G domain. Position 231 (N231) interacts with K(+). GTP is bound by residues 231 to 236 (NVGKSS), 250 to 256 (TSIPGTT), and 275 to 278 (DTAG). Residue S235 coordinates Mg(2+). K(+) is bound by residues T250, I252, and T255. T256 is a Mg(2+) binding site. K459 contributes to the (6S)-5-formyl-5,6,7,8-tetrahydrofolate binding site.

It belongs to the TRAFAC class TrmE-Era-EngA-EngB-Septin-like GTPase superfamily. TrmE GTPase family. Homodimer. Heterotetramer of two MnmE and two MnmG subunits. The cofactor is K(+).

It is found in the cytoplasm. Its function is as follows. Exhibits a very high intrinsic GTPase hydrolysis rate. Involved in the addition of a carboxymethylaminomethyl (cmnm) group at the wobble position (U34) of certain tRNAs, forming tRNA-cmnm(5)s(2)U34. This Syntrophomonas wolfei subsp. wolfei (strain DSM 2245B / Goettingen) protein is tRNA modification GTPase MnmE.